A 432-amino-acid polypeptide reads, in one-letter code: Cytochrome c biogenesis protein CcsB (432 aa).

3 helical membrane-spanning segments follow: residues leucine 14–isoleucine 34, serine 72–arginine 92, and valine 162–serine 182.

Belongs to the Ccs1/CcsB family. May interact with CcsA.

The protein resides in the cellular thylakoid membrane. Functionally, required during biogenesis of c-type cytochromes (cytochrome c6 and cytochrome f) at the step of heme attachment. The polypeptide is Cytochrome c biogenesis protein CcsB (Prochlorococcus marinus (strain MIT 9303)).